The chain runs to 99 residues: Small ribosomal subunit protein bS20 (99 aa).

Over residues 1 to 20 (MASAKPKKKNPRLASGRKRV) the composition is skewed to basic residues. Positions 1–21 (MASAKPKKKNPRLASGRKRVR) are disordered.

Belongs to the bacterial ribosomal protein bS20 family.

Its function is as follows. Binds directly to 16S ribosomal RNA. The polypeptide is Small ribosomal subunit protein bS20 (Verminephrobacter eiseniae (strain EF01-2)).